The sequence spans 86 residues: RNA-binding protein Hfq (86 aa).

A Sm domain is found at 9-68 (DIFLNVLRRERIQVSIYLFNGIKLQGHIESFDQFVIVLKNTISQMVYKHAVSTIVPSKFV).

Belongs to the Hfq family. In terms of assembly, homohexamer.

In terms of biological role, RNA chaperone that binds small regulatory RNA (sRNAs) and mRNAs to facilitate mRNA translational regulation in response to envelope stress, environmental stress and changes in metabolite concentrations. Also binds with high specificity to tRNAs. The sequence is that of RNA-binding protein Hfq from Baumannia cicadellinicola subsp. Homalodisca coagulata.